A 154-amino-acid polypeptide reads, in one-letter code: MAAKESGEKLVALNKKARHLYEFLEKYEAGLVLMGSEVKSLRLGRISFKDGYVKFQDGEAFMIGVHIAPYENAGYAGHEPERPRKLLLHAAEINAMRVKVEQKGLTVVPVRVYFKNGRAKVEIALARGKKVFDRRDDLKSRDLDRDAARELARH.

Belongs to the SmpB family.

It is found in the cytoplasm. In terms of biological role, required for rescue of stalled ribosomes mediated by trans-translation. Binds to transfer-messenger RNA (tmRNA), required for stable association of tmRNA with ribosomes. tmRNA and SmpB together mimic tRNA shape, replacing the anticodon stem-loop with SmpB. tmRNA is encoded by the ssrA gene; the 2 termini fold to resemble tRNA(Ala) and it encodes a 'tag peptide', a short internal open reading frame. During trans-translation Ala-aminoacylated tmRNA acts like a tRNA, entering the A-site of stalled ribosomes, displacing the stalled mRNA. The ribosome then switches to translate the ORF on the tmRNA; the nascent peptide is terminated with the 'tag peptide' encoded by the tmRNA and targeted for degradation. The ribosome is freed to recommence translation, which seems to be the essential function of trans-translation. This chain is SsrA-binding protein, found in Solidesulfovibrio magneticus (strain ATCC 700980 / DSM 13731 / RS-1) (Desulfovibrio magneticus).